The sequence spans 417 residues: Serine--tRNA ligase (417 aa).

232–234 is a binding site for L-serine; the sequence is TAE. Residues 263 to 265 and Val-279 contribute to the ATP site; that span reads RRE. Glu-286 contributes to the L-serine binding site. 350 to 353 is a binding site for ATP; it reads EISS. Residue Ser-385 coordinates L-serine.

The protein belongs to the class-II aminoacyl-tRNA synthetase family. Type-1 seryl-tRNA synthetase subfamily. In terms of assembly, homodimer. The tRNA molecule binds across the dimer.

Its subcellular location is the cytoplasm. The catalysed reaction is tRNA(Ser) + L-serine + ATP = L-seryl-tRNA(Ser) + AMP + diphosphate + H(+). The enzyme catalyses tRNA(Sec) + L-serine + ATP = L-seryl-tRNA(Sec) + AMP + diphosphate + H(+). It participates in aminoacyl-tRNA biosynthesis; selenocysteinyl-tRNA(Sec) biosynthesis; L-seryl-tRNA(Sec) from L-serine and tRNA(Sec): step 1/1. Its function is as follows. Catalyzes the attachment of serine to tRNA(Ser). Is also able to aminoacylate tRNA(Sec) with serine, to form the misacylated tRNA L-seryl-tRNA(Sec), which will be further converted into selenocysteinyl-tRNA(Sec). The chain is Serine--tRNA ligase from Leptospira interrogans serogroup Icterohaemorrhagiae serovar copenhageni (strain Fiocruz L1-130).